A 139-amino-acid polypeptide reads, in one-letter code: Endoribonuclease YbeY (139 aa).

The Zn(2+) site is built by H99, H103, and H109.

It belongs to the endoribonuclease YbeY family. The cofactor is Zn(2+).

It is found in the cytoplasm. In terms of biological role, single strand-specific metallo-endoribonuclease involved in late-stage 70S ribosome quality control and in maturation of the 3' terminus of the 16S rRNA. The sequence is that of Endoribonuclease YbeY from Nautilia profundicola (strain ATCC BAA-1463 / DSM 18972 / AmH).